The following is a 487-amino-acid chain: Meiotic recombination protein SPO11-4 (487 aa).

A disordered region spans residues 1–56 (MDDSTDDDSYHPRKHYAYDRQVSSSRWRTSREYIRGPGPETHTTESAQDGQDPPAG). Residues 119–252 (KSRVEARKTL…LGIIAAEKGI (134 aa)) enclose the Topo IIA-type catalytic domain. Catalysis depends on Y213, which acts as the O-(5'-phospho-DNA)-tyrosine intermediate. Positions 301 and 353 each coordinate Mg(2+).

This sequence belongs to the TOP6A family. In terms of assembly, homodimer. Interacts with TOP6B. Mg(2+) serves as cofactor.

The protein localises to the nucleus. The enzyme catalyses ATP-dependent breakage, passage and rejoining of double-stranded DNA.. In terms of biological role, required for meiotic recombination. Mediates DNA cleavage that forms the double-strand breaks (DSB) that initiate meiotic recombination. Possesses double-stranded DNA cleavage activity in vitro. This Oryza sativa subsp. japonica (Rice) protein is Meiotic recombination protein SPO11-4 (SPO11-4).